The following is a 370-amino-acid chain: MDRRRFLTLLGSAGLTATVATAGTAKAASTGTFPGYKDSYGVLHDTTRCIGCRKCEQACNEVNKLPAPKAKFDDLTVLEKTRRTDADSWTVVNRYNAAGLDHPVFRKQQCNHCLEPACASACFVKAFTKNPDGSVTYDGSLCVGCRYCMVACPFNVPAFQYAEAFDPLIQKCTMCHPRLAEGKLPGCVEICPKEALTFGRRKDLVRIAHDRIRQNPGRYIDHVYGEQEMGGTAWMYLSGVPFSATGMNEELGTKSAPEYTAGALGAVPMVVGIWPILLTGAYAITKRKEKIAAEEQAEAVKQAVAASRAEADDKLKAALAKADKDKEAAVTREVKKAVDEARKTFEEELAAKEQPEAPEGDDAGKPGEDA.

Residues Met-1 to Glu-258 are Cytoplasmic-facing. 4Fe-4S ferredoxin-type domains are found at residues Tyr-40 to Ala-70, Asp-101 to Asp-132, and Gly-133 to Ala-162. [4Fe-4S] cluster is bound by residues Cys-49, Cys-52, Cys-55, Cys-59, Cys-110, Cys-113, Cys-118, Cys-122, Cys-142, Cys-145, Cys-148, Cys-152, Cys-172, Cys-175, Cys-187, and Cys-191. Residues Tyr-259–Ile-284 form a helical membrane-spanning segment. Residues Thr-285–Ala-370 lie on the Periplasmic side of the membrane. The segment covering Phe-345–Pro-355 has biased composition (basic and acidic residues). The tract at residues Phe-345–Ala-370 is disordered.

It localises to the cell membrane. HMWC (high-molecular-weight cytochrome c precursor), ORF2, ORF3, ORF4, ORF5, ORF6 in the HMC operon form a transmembrane protein complex that allows electron flow from the periplasmic hydrogenase to the cytoplasmic enzymes that catalyze reduction of sulfates. ORF2 is a transmembrane redox protein. This Nitratidesulfovibrio vulgaris (strain ATCC 29579 / DSM 644 / CCUG 34227 / NCIMB 8303 / VKM B-1760 / Hildenborough) (Desulfovibrio vulgaris) protein is Protein DVU_0535.